A 244-amino-acid chain; its full sequence is MAGHSKWANIKHRKEKMDSLRGKVFTKLAREIMVAARLGGGDPEANPRLKAAIARAREANIPNENIQRAIMKGTGELAAESYEEVFYEGYGPGGVAILLKIMTDNRNRTAGEIRHLFSKHGGSMGEAGSVQWIFEEKGYITIPKEDNPGINEEEILLLVLDAGAEDLKDEGDQFEVITAPEAFEKVKDALNNANIKTSIAEITMLPKTTVPVSGEEAQKLLKLLDLFEEHDDVQEVYANFELVD.

The protein belongs to the TACO1 family.

The protein localises to the cytoplasm. The chain is Probable transcriptional regulatory protein CHY_1525 from Carboxydothermus hydrogenoformans (strain ATCC BAA-161 / DSM 6008 / Z-2901).